The chain runs to 98 residues: Small ribosomal subunit protein eS24 (98 aa).

It belongs to the eukaryotic ribosomal protein eS24 family.

This Thermoplasma acidophilum (strain ATCC 25905 / DSM 1728 / JCM 9062 / NBRC 15155 / AMRC-C165) protein is Small ribosomal subunit protein eS24 (rps2e).